A 124-amino-acid polypeptide reads, in one-letter code: Histone H2A (124 aa).

Residues 1-18 (MSGRGKSGKARTKAKSRS) show a composition bias toward basic residues. The tract at residues 1–21 (MSGRGKSGKARTKAKSRSSRA) is disordered. Ser2 carries the post-translational modification N-acetylserine. Ser2 carries the post-translational modification Phosphoserine. Gln104 carries the N5-methylglutamine modification. Lys119 is covalently cross-linked (Glycyl lysine isopeptide (Lys-Gly) (interchain with G-Cter in ubiquitin)).

Belongs to the histone H2A family. As to quaternary structure, the nucleosome is a histone octamer containing two molecules each of H2A, H2B, H3 and H4 assembled in one H3-H4 heterotetramer and two H2A-H2B heterodimers. The octamer wraps approximately 147 bp of DNA. In terms of processing, monoubiquitination of Lys-119 gives a specific tag for epigenetic transcriptional repression. Phosphorylation of Ser-2 directly represses transcription.

Its subcellular location is the nucleus. The protein resides in the chromosome. Core component of nucleosome. Nucleosomes wrap and compact DNA into chromatin, limiting DNA accessibility to the cellular machineries which require DNA as a template. Histones thereby play a central role in transcription regulation, DNA repair, DNA replication and chromosomal stability. DNA accessibility is regulated via a complex set of post-translational modifications of histones, also called histone code, and nucleosome remodeling. This is Histone H2A from Paracentrotus lividus (Common sea urchin).